Consider the following 269-residue polypeptide: Seven in absentia homolog 3 (269 aa).

The segment at 61–132 adopts an SIAH-type; degenerate zinc-finger fold; that stretch reads GSFHPHHLSH…VVPHLRQIHR (72 aa). Zn(2+)-binding residues include Cys107, Cys114, His126, and His131.

Belongs to the SINA (Seven in absentia) family.

It is found in the mitochondrion. In terms of biological role, negative regulator of PRKN translocation to damaged mitochondria. Acts probably by destabilizing PINK1 protein, hence inhibiting PRKN targeting to dysfunctional depolarized mitochondria. The sequence is that of Seven in absentia homolog 3 (SIAH3) from Homo sapiens (Human).